The chain runs to 201 residues: Small ribosomal subunit protein uS4 (201 aa).

An S4 RNA-binding domain is found at 91-151 (SRLDNVVYRA…EKSRSMLWFE (61 aa)).

This sequence belongs to the universal ribosomal protein uS4 family. As to quaternary structure, part of the 30S ribosomal subunit. Contacts protein S5. The interaction surface between S4 and S5 is involved in control of translational fidelity.

One of the primary rRNA binding proteins, it binds directly to 16S rRNA where it nucleates assembly of the body of the 30S subunit. In terms of biological role, with S5 and S12 plays an important role in translational accuracy. The sequence is that of Small ribosomal subunit protein uS4 from Corynebacterium jeikeium (strain K411).